We begin with the raw amino-acid sequence, 29 residues long: uncharacterized protein (29 aa).

The protein resides in the plastid. The protein localises to the chloroplast. This is an uncharacterized protein from Trieres chinensis (Marine centric diatom).